The following is a 700-amino-acid chain: MNDKFFIDKTKEILKTYNLSPDKHPPKLSKEEAIKIINTLRELINYHDYRYYVLNQPVISDAEYDAIYKFLKSIEDNYPDLITPDSLTQRVSSDISSTFPQVKHLAPMLSLDNTYNEDDLRDFDRRVKELSGKEHIEYCVEPKYDGAGISLLYENDLFVRGATRGDGEVGEDVTKNLKTIKTIPLRANFSKQGIRLLEIRGEVIINKDDFKKINEERMAENLPPYANPRNLAAGSIRLQDPQEVVKRPLTALVYQITYVEPTNNMPKTHYGAIKMLHDLGFKTPFLDMKLCKNIQEVIDYCRYFESKRESLPYEIDGMVIKVNDISLYDELGFTSHAPRWATAFKFKAKQATTIILDVIFSVGRVGNITPVAKLEPVSLGGVTISSVSLFNEDFIREKDIHIKDTVIIERAGEVIPYVVSVVKEARPKDAKPIVFPKYCPSCGSKLVKAPGEVAWRCINISCPAQVVLRIRHFASKDAMDIKGLGEAVAQLLYDAKLVKNIADIYYLKFSDLVRLPRFAKKSAQNLIDAIEASKRRGLARVLYGLGIRYVGLTTAKKLASYYKDIWNIVKASEEDLRNIEDIGDIVARSIKEFFGLEQNINTIKRLEEAGVLLKEVSEAVSNKLAGLQFVFTGTLSCCTREVARQMVESLGATTSDSVTHHTSYLVVGQDPGATKLRKANMLGIKTISEEEFLRLLEDSK.

NAD(+) is bound by residues 61–65 (DAEYD), 110–111 (SL), and glutamate 141. Lysine 143 acts as the N6-AMP-lysine intermediate in catalysis. NAD(+) contacts are provided by arginine 164, glutamate 202, lysine 321, and lysine 345. Zn(2+) is bound by residues cysteine 439, cysteine 442, cysteine 457, and cysteine 462. Positions 619-700 (AVSNKLAGLQ…EFLRLLEDSK (82 aa)) constitute a BRCT domain.

The protein belongs to the NAD-dependent DNA ligase family. LigA subfamily. Mg(2+) is required as a cofactor. The cofactor is Mn(2+).

It carries out the reaction NAD(+) + (deoxyribonucleotide)n-3'-hydroxyl + 5'-phospho-(deoxyribonucleotide)m = (deoxyribonucleotide)n+m + AMP + beta-nicotinamide D-nucleotide.. In terms of biological role, DNA ligase that catalyzes the formation of phosphodiester linkages between 5'-phosphoryl and 3'-hydroxyl groups in double-stranded DNA using NAD as a coenzyme and as the energy source for the reaction. It is essential for DNA replication and repair of damaged DNA. The polypeptide is DNA ligase (Hydrogenobaculum sp. (strain Y04AAS1)).